The following is a 129-amino-acid chain: Glycine cleavage system H protein (129 aa).

Residues 24-106 (TYTVGITEHA…YAGGWIFKIK (83 aa)) enclose the Lipoyl-binding domain. Lys-65 carries the N6-lipoyllysine modification.

Belongs to the GcvH family. As to quaternary structure, the glycine cleavage system is composed of four proteins: P, T, L and H. It depends on (R)-lipoate as a cofactor.

Functionally, the glycine cleavage system catalyzes the degradation of glycine. The H protein shuttles the methylamine group of glycine from the P protein to the T protein. In Escherichia coli O7:K1 (strain IAI39 / ExPEC), this protein is Glycine cleavage system H protein.